Reading from the N-terminus, the 384-residue chain is Bifunctional enzyme IspD/IspF (384 aa).

The tract at residues 1–226 is 2-C-methyl-D-erythritol 4-phosphate cytidylyltransferase; it reads MAKTVVLVVA…RCLFDGPGEV (226 aa). A 2-C-methyl-D-erythritol 2,4-cyclodiphosphate synthase region spans residues 227–384; that stretch reads RSASGYDVHR…QAMASVWLPR (158 aa). A divalent metal cation-binding residues include aspartate 233 and histidine 235. 4-CDP-2-C-methyl-D-erythritol 2-phosphate contacts are provided by residues 233-235 and 260-261; these read DVH and HS. An a divalent metal cation-binding site is contributed by histidine 268. Residues 282–284, 358–361, phenylalanine 365, and arginine 368 each bind 4-CDP-2-C-methyl-D-erythritol 2-phosphate; these read DIG and TTTE.

The protein in the N-terminal section; belongs to the IspD/TarI cytidylyltransferase family. IspD subfamily. In the C-terminal section; belongs to the IspF family. A divalent metal cation serves as cofactor.

It catalyses the reaction 2-C-methyl-D-erythritol 4-phosphate + CTP + H(+) = 4-CDP-2-C-methyl-D-erythritol + diphosphate. It carries out the reaction 4-CDP-2-C-methyl-D-erythritol 2-phosphate = 2-C-methyl-D-erythritol 2,4-cyclic diphosphate + CMP. The protein operates within isoprenoid biosynthesis; isopentenyl diphosphate biosynthesis via DXP pathway; isopentenyl diphosphate from 1-deoxy-D-xylulose 5-phosphate: step 2/6. It participates in isoprenoid biosynthesis; isopentenyl diphosphate biosynthesis via DXP pathway; isopentenyl diphosphate from 1-deoxy-D-xylulose 5-phosphate: step 4/6. Its function is as follows. Bifunctional enzyme that catalyzes the formation of 4-diphosphocytidyl-2-C-methyl-D-erythritol from CTP and 2-C-methyl-D-erythritol 4-phosphate (MEP) (IspD), and catalyzes the conversion of 4-diphosphocytidyl-2-C-methyl-D-erythritol 2-phosphate (CDP-ME2P) to 2-C-methyl-D-erythritol 2,4-cyclodiphosphate (ME-CPP) with a corresponding release of cytidine 5-monophosphate (CMP) (IspF). The chain is Bifunctional enzyme IspD/IspF from Paramagnetospirillum magneticum (strain ATCC 700264 / AMB-1) (Magnetospirillum magneticum).